We begin with the raw amino-acid sequence, 120 residues long: Large ribosomal subunit protein bL19 (120 aa).

The protein belongs to the bacterial ribosomal protein bL19 family.

Functionally, this protein is located at the 30S-50S ribosomal subunit interface and may play a role in the structure and function of the aminoacyl-tRNA binding site. The sequence is that of Large ribosomal subunit protein bL19 from Synechococcus sp. (strain ATCC 27144 / PCC 6301 / SAUG 1402/1) (Anacystis nidulans).